A 173-amino-acid chain; its full sequence is Flagellar assembly factor FliW (173 aa).

The tract at residues 152–173 (STTVRRKASPPAAGEDKGDVQE) is disordered.

The protein belongs to the FliW family. Interacts with translational regulator CsrA and flagellin(s).

Its subcellular location is the cytoplasm. Its function is as follows. Acts as an anti-CsrA protein, binds CsrA and prevents it from repressing translation of its target genes, one of which is flagellin. Binds to flagellin and participates in the assembly of the flagellum. The polypeptide is Flagellar assembly factor FliW (Nitratidesulfovibrio vulgaris (strain ATCC 29579 / DSM 644 / CCUG 34227 / NCIMB 8303 / VKM B-1760 / Hildenborough) (Desulfovibrio vulgaris)).